The primary structure comprises 365 residues: MVHIIIGGAVSFIIAILFTPILIRRFSDEGLGQEIREEGPRSHLRKRGTPTMGGIAIIVAIVGGYFLAHLASVFTPSSYKPTASGLLVLGLTVGMGFLGFLDDYIKLAKARNLGLNKKGKLLGQAVLAIGFGVLCLLFLNEHGLKPASTKLSFVRDIDTFDIAIGGGIIGTLIFLLFIYILVTAWSNAVNLTDGLDGLAAGTTAIVMAAYSIMTFWQFRNSCASNASVACYQVRDPLDLSILAACGLGACLGFLWWNAAPAKIFMGDTGSLALGGLVAGLSVTSRTELLMIVIGALFVAETISVVIQVVSFRSTGKRPFRMAPIHHHFENGGWAETTVVVRFWLLTAMFAVAGVSMFYADWLGWT.

A run of 10 helical transmembrane segments spans residues 3 to 23, 54 to 74, 81 to 101, 119 to 139, 162 to 182, 198 to 218, 239 to 259, 263 to 283, 289 to 309, and 342 to 362; these read HIIIGGAVSFIIAILFTPILI, GIAIIVAIVGGYFLAHLASVF, PTASGLLVLGLTVGMGFLGFL, GKLLGQAVLAIGFGVLCLLFL, IAIGGGIIGTLIFLLFIYILV, LAAGTTAIVMAAYSIMTFWQF, LSILAACGLGACLGFLWWNAA, IFMGDTGSLALGGLVAGLSVT, LMIVIGALFVAETISVVIQVV, and FWLLTAMFAVAGVSMFYADWL.

This sequence belongs to the glycosyltransferase 4 family. MraY subfamily. It depends on Mg(2+) as a cofactor.

The protein localises to the cell membrane. The enzyme catalyses UDP-N-acetyl-alpha-D-muramoyl-L-alanyl-gamma-D-glutamyl-meso-2,6-diaminopimeloyl-D-alanyl-D-alanine + di-trans,octa-cis-undecaprenyl phosphate = di-trans,octa-cis-undecaprenyl diphospho-N-acetyl-alpha-D-muramoyl-L-alanyl-D-glutamyl-meso-2,6-diaminopimeloyl-D-alanyl-D-alanine + UMP. Its pathway is cell wall biogenesis; peptidoglycan biosynthesis. Catalyzes the initial step of the lipid cycle reactions in the biosynthesis of the cell wall peptidoglycan: transfers peptidoglycan precursor phospho-MurNAc-pentapeptide from UDP-MurNAc-pentapeptide onto the lipid carrier undecaprenyl phosphate, yielding undecaprenyl-pyrophosphoryl-MurNAc-pentapeptide, known as lipid I. The sequence is that of Phospho-N-acetylmuramoyl-pentapeptide-transferase from Corynebacterium kroppenstedtii (strain DSM 44385 / JCM 11950 / CIP 105744 / CCUG 35717).